The sequence spans 523 residues: 2-oxopropyl-CoM reductase, carboxylating (523 aa).

An FAD-binding site is contributed by 53 to 54 (AA). Arginine 56 serves as a coordination point for 2-oxopropyl-coenzyme M. Position 81 (serine 81) interacts with FAD. Residue cysteine 82 participates in 2-oxopropyl-coenzyme M binding. Cysteine 82 and cysteine 87 form a disulfide bridge. FAD is bound at residue alanine 158. NADP(+) contacts are provided by residues 222–225 (GSKT) and 245–246 (RT). Aspartate 353 is a binding site for FAD. NADP(+) is bound at residue glutamate 360. Residue methionine 361 coordinates FAD. Position 365 (arginine 365) interacts with 2-oxopropyl-coenzyme M. Phenylalanine 501 lines the FAD pocket.

Belongs to the class-I pyridine nucleotide-disulfide oxidoreductase family. In terms of assembly, homodimer. Component II of the aliphatic epoxide carboxylation complex together with components I, III and IV. FAD is required as a cofactor.

The enzyme catalyses coenzyme M + acetoacetate + NADP(+) = 2-oxopropyl-coenzyme M + CO2 + NADPH. It functions in the pathway alkene metabolism; propylene degradation. Inhibited (at 40%) by the coenzyme M analog 2-bromoethanesulfonate (BES). BES is a time-dependent inactivator of dithiothreitol-reduced 2-KPCC, where the redox active cysteines are in the free thiol forms. BES does not inactivate air-oxidized 2-KPCC, where the redox active cysteine pair is in the disulfide form. BES specifically alkylates the interchange thiol that facilitates thioether bond cleavage and enolacetone formation during catalysis. Involved in aliphatic epoxide carboxylation. Catalyzes the reductive cleavage of the thioether bond of 2-oxopropyl-coenzyme M (2-KPC), and the subsequent carboxylation of the ketopropyl cleavage product, yielding the products acetoacetate and free coenzyme M. The polypeptide is 2-oxopropyl-CoM reductase, carboxylating (Xanthobacter autotrophicus (strain ATCC BAA-1158 / Py2)).